The following is a 469-amino-acid chain: Programmed cell death protein 4 (469 aa).

Position 1 is an N-acetylmethionine (M1). Disordered stretches follow at residues 1-30 (MDVE…DEEN) and 58-128 (KAKR…GTPG). A compositionally biased stretch (polar residues) spans 7 to 23 (QILNVNPTDPDNLSDSL). Position 25 is a phosphoserine (S25). Residues 58-64 (KAKRRLR) carry the Nuclear localization signal motif. S67 is modified (phosphoserine; by PKB and RPS6KB1). Phosphoserine is present on residues S68, S71, S76, S78, and S94. The short motif at 70–76 (DSGRGDS) is the Phosphodegron element. A compositionally biased stretch (gly residues) spans 114-125 (KKGGAGGKGVWG). Y152 bears the Phosphotyrosine mark. Residues 163–284 (AFEKTLTPII…CNTYIDSYKG (122 aa)) form the MI 1 domain. 2 positions are modified to phosphoserine: S313 and S317. The MI 2 domain occupies 326–449 (HLVKEIDMLL…SKQLRDLCPS (124 aa)). The short motif at 448–454 (PSRGRKR) is the Nuclear localization signal element. Residue S457 is modified to Phosphoserine.

The protein belongs to the PDCD4 family. Interacts (via MI domains) with EIF4A2. Interacts (via MI domains) with EIF4A1 (via N-terminal domain). Heterotrimer with EIF4A1; one molecule of PDCD4 binds two molecules of EIF4A1. Interacts with EIF4G1. May form a complex with EIF4A1 and EIF4G1. The interaction between PDCD4 and EIF4A1 interferes with the interaction between EIF4A1 and EIF4G. When phosphorylated, interacts with BTRC and FBXW11. Post-translationally, polyubiquitinated, leading to its proteasomal degradation. Rapidly degraded in response to mitogens. Phosphorylation of the phosphodegron promotes interaction with BTRC and proteasomal degradation. In terms of processing, phosphorylated at Ser-67 by RPS6KB1 in response to mitogens; phosphorylation promotes proteasomal degradation of PDCD4.

The protein localises to the nucleus. It localises to the cytoplasm. In terms of biological role, inhibits translation initiation and cap-dependent translation. May excert its function by hindering the interaction between EIF4A1 and EIF4G. Inhibits the helicase activity of EIF4A. Modulates the activation of JUN kinase. Down-regulates the expression of MAP4K1, thus inhibiting events important in driving invasion, namely, MAPK85 activation and consequent JUN-dependent transcription. May play a role in apoptosis. Tumor suppressor. Inhibits tumor promoter-induced neoplastic transformation. Binds RNA. This is Programmed cell death protein 4 (Pdcd4) from Rattus norvegicus (Rat).